A 394-amino-acid chain; its full sequence is DNA replication and repair protein RecF (394 aa).

30 to 37 lines the ATP pocket; sequence GRNGFGKT.

The protein belongs to the RecF family.

The protein localises to the cytoplasm. Functionally, the RecF protein is involved in DNA metabolism; it is required for DNA replication and normal SOS inducibility. RecF binds preferentially to single-stranded, linear DNA. It also seems to bind ATP. The chain is DNA replication and repair protein RecF from Corynebacterium glutamicum (strain ATCC 13032 / DSM 20300 / JCM 1318 / BCRC 11384 / CCUG 27702 / LMG 3730 / NBRC 12168 / NCIMB 10025 / NRRL B-2784 / 534).